Here is a 198-residue protein sequence, read N- to C-terminus: Small ribosomal subunit protein uS7 (198 aa).

Belongs to the universal ribosomal protein uS7 family. In terms of assembly, part of the 30S ribosomal subunit.

One of the primary rRNA binding proteins, it binds directly to 16S rRNA where it nucleates assembly of the head domain of the 30S subunit. Is located at the subunit interface close to the decoding center. The protein is Small ribosomal subunit protein uS7 of Nanoarchaeum equitans (strain Kin4-M).